The sequence spans 415 residues: FXa-directed anticoagulant (415 aa).

An N-terminal signal peptide occupies residues 1–17 (MYLKIVILVTFPLVCFT). 4 N-linked (GlcNAc...) asparagine glycosylation sites follow: asparagine 117, asparagine 166, asparagine 216, and asparagine 320.

Belongs to the serpin family. In terms of assembly, (Microbial infection) Interacts with Zika virus envelope protein E and Zika virus-like particles; the interaction does not affect Zika virus replication in human endothelial cells and keratinocytes. The N-terminus is blocked. Female salivary gland (at protein level). Not detected in female carcass without head and salivary glands. Not detected in male tissues.

The protein localises to the secreted. In terms of biological role, anticoagulant serpin-type protein inhibiting host coagulation factor Xa (F10). Does not inhibit host thrombin (F2) and trypsin. Functionally, (Microbial infection) Does not affect Zika virus replication in human endothelial cells and keratinocytes. This Aedes aegypti (Yellowfever mosquito) protein is FXa-directed anticoagulant.